Consider the following 313-residue polypeptide: Formimidoylglutamase (313 aa).

Mn(2+) contacts are provided by H130, D155, H157, D159, D241, and D243.

This sequence belongs to the arginase family. It depends on Mn(2+) as a cofactor.

It catalyses the reaction N-formimidoyl-L-glutamate + H2O = formamide + L-glutamate. It functions in the pathway amino-acid degradation; L-histidine degradation into L-glutamate; L-glutamate from N-formimidoyl-L-glutamate (hydrolase route): step 1/1. Catalyzes the conversion of N-formimidoyl-L-glutamate to L-glutamate and formamide. This Salmonella typhi protein is Formimidoylglutamase.